Reading from the N-terminus, the 259-residue chain is Submandibular glandular kallikrein-9 (259 aa).

The signal sequence occupies residues 1–18 (MWFLILFLALSLGQIDAA). The propeptide at 19 to 24 (PPGQSR) is activation peptide. In terms of domain architecture, Peptidase S1 spans 25–256 (VVGGYNCETN…FTSWIKKVMK (232 aa)). Cystine bridges form between Cys31-Cys171, Cys48-Cys64, Cys150-Cys217, Cys182-Cys196, and Cys207-Cys232. His63 acts as the Charge relay system in catalysis. Asn106 carries N-linked (GlcNAc...) asparagine glycosylation. Residue Asp118 is the Charge relay system of the active site. Catalysis depends on Ser211, which acts as the Charge relay system.

It belongs to the peptidase S1 family. Kallikrein subfamily. Heterodimer of a light chain and heavy chain linked by a disulfide bond.

It catalyses the reaction Preferential cleavage of Arg-|-Xaa bonds in small molecule substrates. Highly selective action to release kallidin (lysyl-bradykinin) from kininogen involves hydrolysis of Met-|-Xaa or Leu-|-Xaa.. Glandular kallikreins cleave Met-Lys and Arg-Ser bonds in kininogen to release Lys-bradykinin. This enzyme has a vasoconstrictor activity. KLK-9 has both a chymotrypsin-like and a trypsin-like properties. In Rattus norvegicus (Rat), this protein is Submandibular glandular kallikrein-9 (Klk9).